The chain runs to 127 residues: Insulin-like growth factor 3.L (127 aa).

The N-terminal stretch at 1–49 is a signal peptide; it reads MPVTAMCLQDSKKLKKAKLTRKKVTPFPFSRMVLCLSLVFTLYVEATNA. The tract at residues 49–80 is b; that stretch reads ARCLRPRSKELLCGSELVDILQFICGPTGFYV. 3 disulfide bridges follow: cysteine 61-cysteine 99, cysteine 73-cysteine 112, and cysteine 98-cysteine 103. A c region spans residues 81 to 92; sequence SKGASFRNRNRP. The a stretch occupies residues 93-113; it reads GIVEECCFCGCSVAILESYCA. Residues 114-121 form a d region; that stretch reads APVTNFTG. Residues 122–127 constitute a propeptide, e peptide; that stretch reads REEQKS.

This sequence belongs to the insulin family.

The protein resides in the secreted. In terms of biological role, the insulin-like growth factors, isolated from plasma, are structurally and functionally related to insulin but have a much higher growth-promoting activity. Promotes anterior neural development. This Xenopus laevis (African clawed frog) protein is Insulin-like growth factor 3.L.